The primary structure comprises 259 residues: tRNA pseudouridine synthase A (259 aa).

Catalysis depends on aspartate 52, which acts as the Nucleophile. Position 113 (tyrosine 113) interacts with substrate.

Belongs to the tRNA pseudouridine synthase TruA family. Homodimer.

It carries out the reaction uridine(38/39/40) in tRNA = pseudouridine(38/39/40) in tRNA. Formation of pseudouridine at positions 38, 39 and 40 in the anticodon stem and loop of transfer RNAs. This Allorhizobium ampelinum (strain ATCC BAA-846 / DSM 112012 / S4) (Agrobacterium vitis (strain S4)) protein is tRNA pseudouridine synthase A.